A 2742-amino-acid polypeptide reads, in one-letter code: Neurobeachin-like protein 2 (2742 aa).

Disordered stretches follow at residues 1312–1333 and 1356–1434; these read ALSPPPTELPADSSDVFLPSES and LERA…QQTP. The segment covering 1384 to 1394 has biased composition (pro residues); that stretch reads TPSPLDGPRPF. Residues 1421–1433 are compositionally biased toward polar residues; that stretch reads GDDTSNTSNPQQT. Phosphothreonine is present on T1855. One can recognise a BEACH-type PH domain in the interval 1903-2028; sequence EKREKLVLSA…LRNQVYSLLL (126 aa). The BEACH domain maps to 2041–2333; the sequence is RSPLEMLRAS…QLLKEPHPPR (293 aa). WD repeat units follow at residues 2374–2412, 2436–2479, 2482–2519, 2532–2570, 2577–2619, 2627–2662, and 2670–2705; these read LVLALVPHRQSHSFITQSSSDMLVTVSASGLLGTHTWLP, KLLS…SLPR, LLNQLSRHLDIVTCLALDTCGIYLISGSRDTTCMVWRL, KPVQVLYGHVAAVSCVAISTELDMAVSGSEDGTVIIHTV, AALR…TYSL, RLRASVTLTEQPTALTVAEDFVLLGTAQCSLHILHL, and PPLPMKVPVHSVSVTKERSHVLVGLEDGKLIVVGAG. 2 positions are modified to phosphoserine: S2727 and S2730.

This sequence belongs to the WD repeat neurobeachin family.

Its subcellular location is the endoplasmic reticulum. In terms of biological role, probably involved in thrombopoiesis. Plays a role in the development or secretion of alpha-granules, that contain several growth factors important for platelet biogenesis. This Mus musculus (Mouse) protein is Neurobeachin-like protein 2 (Nbeal2).